We begin with the raw amino-acid sequence, 463 residues long: Cytidylate cyclase (463 aa).

The 110-residue stretch at 122-231 (VTMFMDIIGS…IGIRIGIDLG (110 aa)) folds into the Guanylate cyclase domain. F125 provides a ligand contact to a ribonucleoside 5'-triphosphate. Residues D127, I128, and D171 each contribute to the Mn(2+) site. An AGS-C domain region spans residues 334 to 454 (KPSRIKVVIS…VISNDTVIER (121 aa)).

This sequence belongs to the adenylyl cyclase class-4/guanylyl cyclase family. Pyrimidine cyclase subfamily. In terms of assembly, homodimer. It depends on Mn(2+) as a cofactor.

The protein resides in the cytoplasm. The catalysed reaction is CTP = 3',5'-cyclic CMP + diphosphate. Pycsar (pyrimidine cyclase system for antiphage resistance) provides immunity against bacteriophage. The pyrimidine cyclase (PycC) synthesizes cyclic nucleotides in response to infection; these serve as specific second messenger signals. The signal activates the adjacent effector, leading to bacterial cell death and abortive phage infection. A clade E Pycsar system. Its function is as follows. The pyrimidine cyclase gene of a two-gene Pycsar system, generates cyclic CMP (cCMP) from CTP in response to bacteriophage infection. Has little to no activity on ATP, GTP or UTP. Expression of this and adjacent effector Ec303145PycTM (AC P0DV27) confers resistance to bacteriophage P1, T5, lambda-vir and phi27. This Escherichia coli protein is Cytidylate cyclase.